The primary structure comprises 264 residues: Thymidylate synthase 2 (264 aa).

Residue R21 participates in dUMP binding. H51 contacts (6R)-5,10-methylene-5,6,7,8-tetrahydrofolate. 126 to 127 (RR) is a dUMP binding site. C146 functions as the Nucleophile in the catalytic mechanism. DUMP contacts are provided by residues 166–169 (RSAD), N177, and 207–209 (HIY). A (6R)-5,10-methylene-5,6,7,8-tetrahydrofolate-binding site is contributed by D169. S263 serves as a coordination point for (6R)-5,10-methylene-5,6,7,8-tetrahydrofolate.

It belongs to the thymidylate synthase family. Bacterial-type ThyA subfamily. As to quaternary structure, homodimer.

It localises to the cytoplasm. The catalysed reaction is dUMP + (6R)-5,10-methylene-5,6,7,8-tetrahydrofolate = 7,8-dihydrofolate + dTMP. The protein operates within pyrimidine metabolism; dTTP biosynthesis. In terms of biological role, catalyzes the reductive methylation of 2'-deoxyuridine-5'-monophosphate (dUMP) to 2'-deoxythymidine-5'-monophosphate (dTMP) while utilizing 5,10-methylenetetrahydrofolate (mTHF) as the methyl donor and reductant in the reaction, yielding dihydrofolate (DHF) as a by-product. This enzymatic reaction provides an intracellular de novo source of dTMP, an essential precursor for DNA biosynthesis. The sequence is that of Thymidylate synthase 2 from Bacillus spizizenii (strain ATCC 23059 / NRRL B-14472 / W23) (Bacillus subtilis subsp. spizizenii).